The following is a 191-amino-acid chain: Small ribosomal subunit protein uS7 (191 aa).

The interval 56–80 is disordered; that stretch reads NKSGEQGDGDGESGGKAGGIKKRSL.

It belongs to the universal ribosomal protein uS7 family. In terms of assembly, part of the 30S ribosomal subunit. Contacts proteins S9 and S11.

Its function is as follows. One of the primary rRNA binding proteins, it binds directly to 16S rRNA where it nucleates assembly of the head domain of the 30S subunit. Is located at the subunit interface close to the decoding center, probably blocks exit of the E-site tRNA. The protein is Small ribosomal subunit protein uS7 of Coxiella burnetii (strain RSA 493 / Nine Mile phase I).